Consider the following 1109-residue polypeptide: Pesticidal crystal protein Cry28Aa (1109 aa).

The protein belongs to the delta endotoxin family.

Functionally, promotes colloidosmotic lysis by binding to the midgut epithelial cells of insects. This Bacillus thuringiensis subsp. finitimus protein is Pesticidal crystal protein Cry28Aa (cry28Aa).